Consider the following 266-residue polypeptide: 3-methyl-2-oxobutanoate hydroxymethyltransferase (266 aa).

Residues Asp-43 and Asp-82 each contribute to the Mg(2+) site. Residues 43-44 (DS), Asp-82, and Lys-110 contribute to the 3-methyl-2-oxobutanoate site. Glu-112 contributes to the Mg(2+) binding site. Glu-179 functions as the Proton acceptor in the catalytic mechanism.

This sequence belongs to the PanB family. Homodecamer; pentamer of dimers. The cofactor is Mg(2+).

Its subcellular location is the cytoplasm. It carries out the reaction 3-methyl-2-oxobutanoate + (6R)-5,10-methylene-5,6,7,8-tetrahydrofolate + H2O = 2-dehydropantoate + (6S)-5,6,7,8-tetrahydrofolate. It functions in the pathway cofactor biosynthesis; (R)-pantothenate biosynthesis; (R)-pantoate from 3-methyl-2-oxobutanoate: step 1/2. In terms of biological role, catalyzes the reversible reaction in which hydroxymethyl group from 5,10-methylenetetrahydrofolate is transferred onto alpha-ketoisovalerate to form ketopantoate. The polypeptide is 3-methyl-2-oxobutanoate hydroxymethyltransferase (Psychrobacter arcticus (strain DSM 17307 / VKM B-2377 / 273-4)).